Reading from the N-terminus, the 506-residue chain is Maturase K (506 aa).

The protein belongs to the intron maturase 2 family. MatK subfamily.

Its subcellular location is the plastid. The protein resides in the chloroplast. Its function is as follows. Usually encoded in the trnK tRNA gene intron. Probably assists in splicing its own and other chloroplast group II introns. The polypeptide is Maturase K (Arctostaphylos uva-ursi (Bearberry)).